Reading from the N-terminus, the 734-residue chain is Methionine--tRNA ligase (734 aa).

The 'HIGH' region signature appears at 12 to 22; that stretch reads PYVNNIPHLGN. Zn(2+) contacts are provided by cysteine 143, cysteine 146, cysteine 155, and cysteine 158. The 'KMSKS' region signature appears at 330–334; the sequence is KFSKS. Lysine 333 contributes to the ATP binding site. A tRNA-binding domain is found at 570 to 675; sequence FREKVLLRVV…QNPIAGERII (106 aa).

Belongs to the class-I aminoacyl-tRNA synthetase family. MetG type 1 subfamily. Homodimer. Zn(2+) serves as cofactor.

Its subcellular location is the cytoplasm. It catalyses the reaction tRNA(Met) + L-methionine + ATP = L-methionyl-tRNA(Met) + AMP + diphosphate. Its function is as follows. Is required not only for elongation of protein synthesis but also for the initiation of all mRNA translation through initiator tRNA(fMet) aminoacylation. The protein is Methionine--tRNA ligase of Borreliella burgdorferi (strain ZS7) (Borrelia burgdorferi).